We begin with the raw amino-acid sequence, 257 residues long: Transcriptional regulatory protein TrcR (257 aa).

The Response regulatory domain maps to Arg33–Leu147. Asp82 carries the 4-aspartylphosphate modification. Residues Asp158–Pro255 constitute a DNA-binding region (ompR/PhoB-type).

Phosphorylated by TrcS.

Functionally, member of the two-component regulatory system TrcS/TrcR. Activates its own expression by binding specifically to the AT-rich sequence of the trcR promoter region. Also negatively regulates the expression of Rv1057 by binding to an AT-rich sequences within the Rv1057 upstream sequence. The TrcR-TrcS regulatory system may act as a transition regulatory system involved in adapting to an intracellular environment and transitioning from latency to reactivation. The sequence is that of Transcriptional regulatory protein TrcR from Mycobacterium tuberculosis (strain ATCC 25618 / H37Rv).